The sequence spans 317 residues: METWQEVTVHVHRDAQEAVSYVLIETGSQGVAIADSADYIGQKDRFGELYPDVEQSDMIAITAYYPSSTNLADVIATINEQLAELASFGLQVGQVTVDSQELAEEDWADNWKKYYEPARITHDLTIVPSWTDYDASAGEKVIKLDPGMAFGTGTHPTTKMSLFALEQILRGGETVIDVGTGSGVLSIASSLLGAKTIYAYDLDDVAVRVAQENIDLNQGTDNIHVAAGDLLKGVSQEADVIVANILADILVLLTDDAYRLVKDQGYLILSGIISEKLDMVLEAAFSAGFFLETHMIQGEWNALVFKKTDDISGVIGG.

Positions 158, 179, 201, and 244 each coordinate S-adenosyl-L-methionine.

Belongs to the methyltransferase superfamily. PrmA family.

The protein localises to the cytoplasm. The catalysed reaction is L-lysyl-[protein] + 3 S-adenosyl-L-methionine = N(6),N(6),N(6)-trimethyl-L-lysyl-[protein] + 3 S-adenosyl-L-homocysteine + 3 H(+). Methylates ribosomal protein L11. The chain is Ribosomal protein L11 methyltransferase from Streptococcus pyogenes serotype M5 (strain Manfredo).